The sequence spans 482 residues: Capsule synthesis positive regulator AcpB (482 aa).

2 PRD domains span residues 165-270 (PFEK…YKDI) and 283-395 (EGNL…YTSN).

It belongs to the AtxA/AcpA family.

Its function is as follows. AcpB and AcpA regulate cap gene expression and capsule synthesis. The polypeptide is Capsule synthesis positive regulator AcpB (acpB) (Bacillus anthracis).